We begin with the raw amino-acid sequence, 473 residues long: MAPSLSTAVSSLLLLLLLAAAISVSSSPPMPEDSIRVISAEKRIDLTSPIVKVFLTLKLENDATAPEASQVLLAFTPTEVEHLAIVKATRAEGKRKKKIYVPLSVKASDLAAAPNGARLYSILLSTPLKPAEVTTLEVFYALTHSLEPFPAEITQSDPQLVYYRDSAVLLSPYHVLEQVTYIKMPSNRVESFTRVDPTSRAGNEVKYGAYNNQLPNSYVPILVHYENNRPFAVVEEFVRKVEISHWGNVQITEQYKLKHGGAQHKGVFSRLEYQSRPSISGVSSFKNLLARLPPRVHSVYYRDEIGNISSSHLRSDSHKSELEIEPRYPLFGGWHCTFTIGYGLPLQDFLFESDDGRRYINLTFGCPLLDTVVDDLTIKVVLPEGSTSPQAVVPFLMEQYLETSYSYLDVVGRTTVVLKKRNVVGEHNVPFQVYYEFNPIFMLAEPLMLISAVFLFFVACIAYLHMDLSIGKS.

Residues 1-27 (MAPSLSTAVSSLLLLLLLAAAISVSSS) form the signal peptide. Over 28-439 (PPMPEDSIRV…PFQVYYEFNP (412 aa)) the chain is Lumenal. Residues N307 and N361 are each glycosylated (N-linked (GlcNAc...) asparagine). A helical transmembrane segment spans residues 440–460 (IFMLAEPLMLISAVFLFFVAC). Residues 461 to 473 (IAYLHMDLSIGKS) are Cytoplasmic-facing.

This sequence belongs to the OST1 family. In terms of assembly, component of the oligosaccharyltransferase (OST) complex.

The protein localises to the endoplasmic reticulum membrane. It functions in the pathway protein modification; protein glycosylation. Subunit of the oligosaccharyl transferase (OST) complex that catalyzes the initial transfer of a defined glycan (Glc(3)Man(9)GlcNAc(2) in eukaryotes) from the lipid carrier dolichol-pyrophosphate to an asparagine residue within an Asn-X-Ser/Thr consensus motif in nascent polypeptide chains, the first step in protein N-glycosylation. N-glycosylation occurs cotranslationally and the complex associates with the Sec61 complex at the channel-forming translocon complex that mediates protein translocation across the endoplasmic reticulum (ER). All subunits are required for a maximal enzyme activity. This is Dolichyl-diphosphooligosaccharide--protein glycosyltransferase subunit 1B (OST1B) from Oryza sativa subsp. japonica (Rice).